Consider the following 101-residue polypeptide: B3 domain-containing protein At1g08985 (101 aa).

A DNA-binding region (TF-B3) is located at residues 7–101 (IVKTLSETDC…WQNTKFIFSM (95 aa)).

It localises to the nucleus. The protein is B3 domain-containing protein At1g08985 of Arabidopsis thaliana (Mouse-ear cress).